Here is a 122-residue protein sequence, read N- to C-terminus: MKAERPDTRKLKALKRGHIAEYRAALCLMLKGYRIVAMRYRTRLGEIDIIARRGDLVACVEVKARVSLEDAVFAVTDTAQRRIRAASDLWLSRQGDFHRLSVRYDIVAVTPWRWPRHLPDAF.

This sequence belongs to the UPF0102 family.

The protein is UPF0102 protein R00337 of Rhizobium meliloti (strain 1021) (Ensifer meliloti).